Consider the following 94-residue polypeptide: MRQCASASSSTSRPPEAAGEEGKRRRRRRGWLLQAAAREQRSRFYIFRRCVAMLLCWYKYRNITPYNVVPLGIYGLVWFATMPKYWQCQTIGKF.

A compositionally biased stretch (polar residues) spans 1 to 13; that stretch reads MRQCASASSSTSR. The segment at 1–26 is disordered; that stretch reads MRQCASASSSTSRPPEAAGEEGKRRR. The required for DVL/RTFL small polypeptide activity stretch occupies residues 28–59; sequence RRGWLLQAAAREQRSRFYIFRRCVAMLLCWYK. The helical transmembrane segment at 63–82 threads the bilayer; that stretch reads ITPYNVVPLGIYGLVWFATM.

This sequence belongs to the DVL/RTFL small polypeptides family.

Its subcellular location is the cell membrane. In terms of biological role, small polypeptide acting as a regulatory molecule which coordinates cellular responses required for differentiation, growth and development, probably by restricting polar cell proliferation in lateral organs. In Oryza sativa subsp. japonica (Rice), this protein is Small polypeptide ROTUNDIFOLIA LIKE 1.